Reading from the N-terminus, the 340-residue chain is Protein B17 (340 aa).

It belongs to the orthopoxvirus B17 protein family.

The polypeptide is Protein B17 (Variola virus (isolate Human/India/Ind3/1967) (VARV)).